Reading from the N-terminus, the 272-residue chain is Formamidopyrimidine-DNA glycosylase (272 aa).

P2 (schiff-base intermediate with DNA) is an active-site residue. E3 (proton donor) is an active-site residue. The Proton donor; for beta-elimination activity role is filled by K58. H93, R112, and R153 together coordinate DNA. An FPG-type zinc finger spans residues 238–272 (HVYGKSGQHCPKCGNILEDLKISNRGTVYCPHCQR). R262 (proton donor; for delta-elimination activity) is an active-site residue.

It belongs to the FPG family. Monomer. Zn(2+) is required as a cofactor.

The enzyme catalyses Hydrolysis of DNA containing ring-opened 7-methylguanine residues, releasing 2,6-diamino-4-hydroxy-5-(N-methyl)formamidopyrimidine.. It catalyses the reaction 2'-deoxyribonucleotide-(2'-deoxyribose 5'-phosphate)-2'-deoxyribonucleotide-DNA = a 3'-end 2'-deoxyribonucleotide-(2,3-dehydro-2,3-deoxyribose 5'-phosphate)-DNA + a 5'-end 5'-phospho-2'-deoxyribonucleoside-DNA + H(+). In terms of biological role, involved in base excision repair of DNA damaged by oxidation or by mutagenic agents. Acts as a DNA glycosylase that recognizes and removes damaged bases. Has a preference for oxidized purines, such as 7,8-dihydro-8-oxoguanine (8-oxoG). Has AP (apurinic/apyrimidinic) lyase activity and introduces nicks in the DNA strand. Cleaves the DNA backbone by beta-delta elimination to generate a single-strand break at the site of the removed base with both 3'- and 5'-phosphates. The polypeptide is Formamidopyrimidine-DNA glycosylase (Dichelobacter nodosus (strain VCS1703A)).